Here is a 74-residue protein sequence, read N- to C-terminus: Tau-AnmTx Ueq 12-1 (74 aa).

A signal peptide spans 1–18; sequence MCLLMLVLGAMYVQGWHS. Residues 19–27 constitute a propeptide, removed in mature form; sequence AGFGKRTLK. 5 disulfides stabilise this stretch: Cys30–Cys37, Cys40–Cys71, Cys46–Cys64, Cys51–Cys72, and Cys58–Cys73.

This sequence belongs to the Cnidaria small cysteine-rich protein (SCRiP) family. In terms of tissue distribution, detected in mucus secreted from ectoderm.

Its subcellular location is the secreted. In terms of biological role, potentiates activation of mammalian TRPA1, a non-selective cation channel involved in perception of pain, in vitro yet has an analgesic and anti-inflammatory effect in vivo. Has antibacterial activity against C.glutamicum (MIC=50 uM) and, to a lesser extent, against S.aureus but not against P.aeruginosa or E.coli. The protein is Tau-AnmTx Ueq 12-1 of Urticina eques (Sea anemone).